The chain runs to 136 residues: Protein PsiE (136 aa).

4 helical membrane-spanning segments follow: residues 15–35 (ILQN…VVFL), 55–75 (YELV…ALIV), 83–103 (HFPL…LIIV), and 108–128 (PMDV…LWLC).

The protein belongs to the PsiE family.

Its subcellular location is the cell inner membrane. This is Protein PsiE from Salmonella gallinarum (strain 287/91 / NCTC 13346).